Reading from the N-terminus, the 267-residue chain is Farnesyl diphosphate phosphatase YisP (267 aa).

Belongs to the phytoene/squalene synthase family. Monomer.

It catalyses the reaction (2E,6E)-farnesyl diphosphate + H2O = (2E,6E)-farnesol + diphosphate. Diphosphate release from FPP is inhibited by zaragozic acid. In terms of biological role, a farnesyl diphosphate (FPP) phosphatase. Involved in biofilm formation, its disruption blocks biofilm synthesis which is restored by exogenous farnesol. Releases diphosphate from FPP, was initally suggested to be a squalene synthase. Diphosphate release is higher from FPP than geranyl pyrophosphate (GPP) or geranylgeranyl pyrophosphate (GGPP). Biofilm synthesis is partially restored by exogenous squalene, beta-carotene or retinol. Required for integrity of cell membrane lipid rafts. Involved in spatial organization of membranes, required for the flotillin-like proteins FloT and FloA to function correctly. This Bacillus subtilis (strain 168) protein is Farnesyl diphosphate phosphatase YisP (yisP).